The following is a 164-amino-acid chain: uncharacterized protein (164 aa).

Residues 1–22 (MKTNRSLVVIVSLITATLLLTA) form the signal peptide. Cysteine 23 carries N-palmitoyl cysteine lipidation. Cysteine 23 carries the S-diacylglycerol cysteine lipid modification.

Its subcellular location is the cell membrane. This is an uncharacterized protein from Escherichia coli (strain K12).